The sequence spans 520 residues: Solute carrier family 2, facilitated glucose transporter member 14 (520 aa).

The Cytoplasmic segment spans residues M1–A29. A helical membrane pass occupies residues V30 to Y50. The Extracellular portion of the chain corresponds to N51–S88. N67 carries N-linked (GlcNAc...) asparagine glycosylation. Residues L89–V109 form a helical membrane-spanning segment. Residues N110–S117 are Cytoplasmic-facing. Residues M118–A138 form a helical membrane-spanning segment. The Extracellular segment spans residues E139–R148. Residues L149 to I169 form a helical membrane-spanning segment. At S170–A177 the chain is on the cytoplasmic side. Residues F178–L198 form a helical membrane-spanning segment. Q183 contacts D-glucose. Topologically, residues E199–L207 are extracellular. The helical transmembrane segment at W208 to C228 threads the bilayer. Topologically, residues C229 to P293 are cytoplasmic. The helical transmembrane segment at I294–Y314 threads the bilayer. D-glucose contacts are provided by residues Q304–Q305 and N310. Topologically, residues Y315–P328 are extracellular. A helical membrane pass occupies residues I329 to L349. Position 339 (N339) interacts with D-glucose. Residues V350–L358 lie on the Cytoplasmic side of the membrane. The chain crosses the membrane as a helical span at residues H359–L379. Over K380–G392 the chain is Extracellular. Residues A393–V413 form a helical membrane-spanning segment. 2 residues coordinate D-glucose: E402 and W410. Residues A414–P423 are Cytoplasmic-facing. The chain crosses the membrane as a helical span at residues A424–F444. Residues P445 to L451 are Extracellular-facing. The chain crosses the membrane as a helical span at residues G452 to F472. The Cytoplasmic segment spans residues K473–V520. The disordered stretch occupies residues A493–V520.

It belongs to the major facilitator superfamily. Sugar transporter (TC 2.A.1.1) family. Glucose transporter subfamily. Mainly expressed in testis. Also expressed in small intestine, liver and kidney.

The protein localises to the cell membrane. The enzyme catalyses D-glucose(out) = D-glucose(in). The catalysed reaction is L-dehydroascorbate(out) = L-dehydroascorbate(in). In terms of biological role, hexose transporter that can mediate the transport of glucose and dehydroascorbate across the cell membrane. This chain is Solute carrier family 2, facilitated glucose transporter member 14, found in Homo sapiens (Human).